The chain runs to 159 residues: Small ribosomal subunit protein uS9 (159 aa).

It belongs to the universal ribosomal protein uS9 family.

This Beijerinckia indica subsp. indica (strain ATCC 9039 / DSM 1715 / NCIMB 8712) protein is Small ribosomal subunit protein uS9.